A 564-amino-acid chain; its full sequence is MSININMPAAAVLRPFRCSQLHVDETRRSGNYRPSAWDSNYIQSLNSQYKEKKCLTRLEGLIEQVKELKGTKMEAVQQLELIDDSQNLGLSYYFQDKIKHILNLIYNDHKYFYDSEAEGMDLYFTALGFRLFRQHGFKVSQEVFDRFKNENGTYFKHDDTKGLLQLYEASFLVREGEETLEQAREFATKSLQRKLDEDGDGIDANIESWIRHSLEIPLHWRAQRLEARWFLDAYARRPDMNPVIFELAKLNFNIVQATQQEELKALSRWWSSLGLAEKLPFVRDRLVESYFWAIPLFEPHQYGYQRKVATKIITLITSLDDVYDIYGTLDELQLFTNLFERWDNASIGRLPEYLQLFYFAIHNFVSEVAYDILKEKGFTSIVYLQRSWVDLLKGYLKEAKWYNSGYTPSLEEYFDNAFMTIGAPPVLSQAYFTLGSSMEKPIIESMYEYDNILRVSGMLVRLPDDLGTSSFEMERGDVPKSVQLYMKETNATEEEAVEHVRFLNREAWKKMNTAEAAGDSPLVSDVVAVAANLGRAAQFMYFDGDGNQSSLQQWIVSMLFEPYA.

Residues Asp320, Asp324, Asp464, Thr468, and Glu472 each coordinate Mg(2+). The DDXXD motif signature appears at 320–324; the sequence is DDVYD.

This sequence belongs to the terpene synthase family. The cofactor is Mg(2+). Mn(2+) serves as cofactor.

The enzyme catalyses (2E)-geranyl diphosphate + H2O = (R)-linalool + diphosphate. In terms of biological role, specifically catalyzes production of (R)-(-)-linalool, the main component of lavender essential oil. The protein is R-linalool synthase of Lavandula angustifolia (Lavender).